Reading from the N-terminus, the 157-residue chain is 2-C-methyl-D-erythritol 2,4-cyclodiphosphate synthase (157 aa).

A divalent metal cation-binding residues include aspartate 8 and histidine 10. Residues 8–10 and 35–36 each bind 4-CDP-2-C-methyl-D-erythritol 2-phosphate; these read DIH and HS. Histidine 43 lines the a divalent metal cation pocket. 4-CDP-2-C-methyl-D-erythritol 2-phosphate-binding positions include 57-59, 62-66, and lysine 142; these read DIG and FPNND.

The protein belongs to the IspF family. As to quaternary structure, homotrimer. It depends on a divalent metal cation as a cofactor.

It carries out the reaction 4-CDP-2-C-methyl-D-erythritol 2-phosphate = 2-C-methyl-D-erythritol 2,4-cyclic diphosphate + CMP. Its pathway is isoprenoid biosynthesis; isopentenyl diphosphate biosynthesis via DXP pathway; isopentenyl diphosphate from 1-deoxy-D-xylulose 5-phosphate: step 4/6. Its function is as follows. Involved in the biosynthesis of isopentenyl diphosphate (IPP) and dimethylallyl diphosphate (DMAPP), two major building blocks of isoprenoid compounds. Catalyzes the conversion of 4-diphosphocytidyl-2-C-methyl-D-erythritol 2-phosphate (CDP-ME2P) to 2-C-methyl-D-erythritol 2,4-cyclodiphosphate (ME-CPP) with a corresponding release of cytidine 5-monophosphate (CMP). The chain is 2-C-methyl-D-erythritol 2,4-cyclodiphosphate synthase from Wigglesworthia glossinidia brevipalpis.